Here is a 357-residue protein sequence, read N- to C-terminus: 3-isopropylmalate dehydrogenase (357 aa).

75-88 (GPKWEHLPPAEQPE) lines the NAD(+) pocket. Residues arginine 96, arginine 106, arginine 135, and aspartate 224 each coordinate substrate. 3 residues coordinate Mg(2+): aspartate 224, aspartate 248, and aspartate 252. Residue 282–294 (GSAPDIAGQGIAN) coordinates NAD(+).

Belongs to the isocitrate and isopropylmalate dehydrogenases family. LeuB type 1 subfamily. Homodimer. The cofactor is Mg(2+). Requires Mn(2+) as cofactor.

The protein resides in the cytoplasm. It carries out the reaction (2R,3S)-3-isopropylmalate + NAD(+) = 4-methyl-2-oxopentanoate + CO2 + NADH. Its pathway is amino-acid biosynthesis; L-leucine biosynthesis; L-leucine from 3-methyl-2-oxobutanoate: step 3/4. Functionally, catalyzes the oxidation of 3-carboxy-2-hydroxy-4-methylpentanoate (3-isopropylmalate) to 3-carboxy-4-methyl-2-oxopentanoate. The product decarboxylates to 4-methyl-2 oxopentanoate. The protein is 3-isopropylmalate dehydrogenase of Desulfotalea psychrophila (strain LSv54 / DSM 12343).